A 122-amino-acid polypeptide reads, in one-letter code: Large ribosomal subunit protein uL14 (122 aa).

It belongs to the universal ribosomal protein uL14 family. As to quaternary structure, part of the 50S ribosomal subunit. Forms a cluster with proteins L3 and L19. In the 70S ribosome, L14 and L19 interact and together make contacts with the 16S rRNA in bridges B5 and B8.

Its function is as follows. Binds to 23S rRNA. Forms part of two intersubunit bridges in the 70S ribosome. This is Large ribosomal subunit protein uL14 from Myxococcus xanthus (strain DK1622).